The primary structure comprises 343 residues: Biotin synthase 2 (343 aa).

The 228-residue stretch at 58–285 (NEVQLSTLLS…LTMVRLSAGR (228 aa)) folds into the Radical SAM core domain. Residues cysteine 73, cysteine 77, and cysteine 80 each contribute to the [4Fe-4S] cluster site. Residues cysteine 117, cysteine 148, cysteine 208, and arginine 280 each contribute to the [2Fe-2S] cluster site.

This sequence belongs to the radical SAM superfamily. Biotin synthase family. In terms of assembly, homodimer. Requires [4Fe-4S] cluster as cofactor. [2Fe-2S] cluster serves as cofactor.

It carries out the reaction (4R,5S)-dethiobiotin + (sulfur carrier)-SH + 2 reduced [2Fe-2S]-[ferredoxin] + 2 S-adenosyl-L-methionine = (sulfur carrier)-H + biotin + 2 5'-deoxyadenosine + 2 L-methionine + 2 oxidized [2Fe-2S]-[ferredoxin]. Its pathway is cofactor biosynthesis; biotin biosynthesis; biotin from 7,8-diaminononanoate: step 2/2. In terms of biological role, catalyzes the conversion of dethiobiotin (DTB) to biotin by the insertion of a sulfur atom into dethiobiotin via a radical-based mechanism. The polypeptide is Biotin synthase 2 (Polaromonas sp. (strain JS666 / ATCC BAA-500)).